Here is a 20-residue protein sequence, read N- to C-terminus: Juvenile hormone-binding protein (20 aa).

Its subcellular location is the secreted. Prevents juvenile hormone from being hydrolyzed by general esterases by combining with it specifically. The sequence is that of Juvenile hormone-binding protein (JHBP) from Bombyx mori (Silk moth).